The following is a 38-amino-acid chain: Photosystem II reaction center protein L (38 aa).

A helical membrane pass occupies residues serine 17–phenylalanine 37.

Belongs to the PsbL family. As to quaternary structure, PSII is composed of 1 copy each of membrane proteins PsbA, PsbB, PsbC, PsbD, PsbE, PsbF, PsbH, PsbI, PsbJ, PsbK, PsbL, PsbM, PsbT, PsbX, PsbY, PsbZ, Psb30/Ycf12, at least 3 peripheral proteins of the oxygen-evolving complex and a large number of cofactors. It forms dimeric complexes.

The protein localises to the plastid. The protein resides in the chloroplast thylakoid membrane. Functionally, one of the components of the core complex of photosystem II (PSII). PSII is a light-driven water:plastoquinone oxidoreductase that uses light energy to abstract electrons from H(2)O, generating O(2) and a proton gradient subsequently used for ATP formation. It consists of a core antenna complex that captures photons, and an electron transfer chain that converts photonic excitation into a charge separation. This subunit is found at the monomer-monomer interface and is required for correct PSII assembly and/or dimerization. This is Photosystem II reaction center protein L from Huperzia lucidula (Shining clubmoss).